The sequence spans 550 residues: ATP synthase subunit alpha (550 aa).

172 to 179 (GDRKTGKT) lines the ATP pocket. The disordered stretch occupies residues 521 to 550 (EPAAEPLAGEEDRETVTRFHDDATDRPAGS). The span at 534-550 (ETVTRFHDDATDRPAGS) shows a compositional bias: basic and acidic residues.

It belongs to the ATPase alpha/beta chains family. As to quaternary structure, F-type ATPases have 2 components, CF(1) - the catalytic core - and CF(0) - the membrane proton channel. CF(1) has five subunits: alpha(3), beta(3), gamma(1), delta(1), epsilon(1). CF(0) has three main subunits: a(1), b(2) and c(9-12). The alpha and beta chains form an alternating ring which encloses part of the gamma chain. CF(1) is attached to CF(0) by a central stalk formed by the gamma and epsilon chains, while a peripheral stalk is formed by the delta and b chains.

It localises to the cell membrane. The catalysed reaction is ATP + H2O + 4 H(+)(in) = ADP + phosphate + 5 H(+)(out). Functionally, produces ATP from ADP in the presence of a proton gradient across the membrane. The alpha chain is a regulatory subunit. The polypeptide is ATP synthase subunit alpha (Salinispora tropica (strain ATCC BAA-916 / DSM 44818 / JCM 13857 / NBRC 105044 / CNB-440)).